The chain runs to 286 residues: MWQAISRLLSEQLGEGEIELRNELPGGEVHAAWHLRYAGHDFFVKCDERELLPGFTAEADQLELLSRSKTVTVPKVWAVGADRDYSFLVMDYLPPRPLDAHSAFILGQQIARLHQWSDQPQFGLDFDNALSTTPQPNTWQRRWSTFFAEQRIGWQLELAAEKGIAFGNIDAIVEHIQQRLASHQPQPSLLHGDLWSGNCALGPDGPYIFDPACYWGDRECDLAMLPLHTEQPPQIYDGYQSVSPLPADFLERQPVYQLYTLLNRARLFGGQHLVIAQQSLDRLLAA.

91 to 93 serves as a coordination point for ATP; that stretch reads DYL. Asp-193 acts as the Proton acceptor in catalysis.

The protein belongs to the fructosamine kinase family.

Functionally, ketoamine kinase that phosphorylates ketoamines on the third carbon of the sugar moiety to generate ketoamine 3-phosphate. Its precise substrate are unknown: does not have ribulosamine and/or erythrulosamine 3-kinase activity in vitro. The sequence is that of Probable ketoamine kinase YniA (yniA) from Escherichia coli (strain K12).